Here is a 417-residue protein sequence, read N- to C-terminus: Serine hydroxymethyltransferase (417 aa).

Residues L121 and G125–L127 each bind (6S)-5,6,7,8-tetrahydrofolate. Residue K229 is modified to N6-(pyridoxal phosphate)lysine. S355–F357 is a (6S)-5,6,7,8-tetrahydrofolate binding site.

Belongs to the SHMT family. As to quaternary structure, homodimer. Pyridoxal 5'-phosphate serves as cofactor.

The protein resides in the cytoplasm. The catalysed reaction is (6R)-5,10-methylene-5,6,7,8-tetrahydrofolate + glycine + H2O = (6S)-5,6,7,8-tetrahydrofolate + L-serine. Its pathway is one-carbon metabolism; tetrahydrofolate interconversion. It functions in the pathway amino-acid biosynthesis; glycine biosynthesis; glycine from L-serine: step 1/1. Its function is as follows. Catalyzes the reversible interconversion of serine and glycine with tetrahydrofolate (THF) serving as the one-carbon carrier. This reaction serves as the major source of one-carbon groups required for the biosynthesis of purines, thymidylate, methionine, and other important biomolecules. Also exhibits THF-independent aldolase activity toward beta-hydroxyamino acids, producing glycine and aldehydes, via a retro-aldol mechanism. This chain is Serine hydroxymethyltransferase, found in Yersinia pestis bv. Antiqua (strain Antiqua).